A 230-amino-acid polypeptide reads, in one-letter code: Orotidine 5'-phosphate decarboxylase (230 aa).

Substrate is bound by residues aspartate 10, lysine 32, 59–68, threonine 119, arginine 180, glutamine 189, glycine 209, and arginine 210; that span reads DLKYHDIPNT. The Proton donor role is filled by lysine 61.

This sequence belongs to the OMP decarboxylase family. Type 1 subfamily. As to quaternary structure, homodimer.

The enzyme catalyses orotidine 5'-phosphate + H(+) = UMP + CO2. It functions in the pathway pyrimidine metabolism; UMP biosynthesis via de novo pathway; UMP from orotate: step 2/2. Functionally, catalyzes the decarboxylation of orotidine 5'-monophosphate (OMP) to uridine 5'-monophosphate (UMP). The protein is Orotidine 5'-phosphate decarboxylase of Glaesserella parasuis serovar 5 (strain SH0165) (Haemophilus parasuis).